The following is a 220-amino-acid chain: MTKMAELKGSSFTLSALHLVDGDIKKATDYLKEKVNQAPNFFASAPVVIDITQAGREINFKQLKEDVKDAGMIPVGVSGCKDARMQNEAKSAGFAIMNAARQAKDMPVTVEPTRIIRTPVRSGQQIYAKNCDLVVMNHVSAGAEIIADGCIHVYGNLRGRAIAGASGQHQAQIFCQNIQSELISIAGNYWLSDKIKAEFWGKGVVISLAENNLNIEHLTL.

It belongs to the MinC family. Interacts with MinD and FtsZ.

In terms of biological role, cell division inhibitor that blocks the formation of polar Z ring septums. Rapidly oscillates between the poles of the cell to destabilize FtsZ filaments that have formed before they mature into polar Z rings. Prevents FtsZ polymerization. The protein is Probable septum site-determining protein MinC of Photobacterium profundum (strain SS9).